The chain runs to 275 residues: Phosphate import ATP-binding protein PstB (275 aa).

Residues 29–270 (VSVRDLNFYY…PTDRRTQDYI (242 aa)) enclose the ABC transporter domain. An ATP-binding site is contributed by 61–68 (GPSGCGKS).

This sequence belongs to the ABC transporter superfamily. Phosphate importer (TC 3.A.1.7) family. In terms of assembly, the complex is composed of two ATP-binding proteins (PstB), two transmembrane proteins (PstC and PstA) and a solute-binding protein (PstS).

The protein localises to the cell inner membrane. The enzyme catalyses phosphate(out) + ATP + H2O = ADP + 2 phosphate(in) + H(+). In terms of biological role, part of the ABC transporter complex PstSACB involved in phosphate import. Responsible for energy coupling to the transport system. The chain is Phosphate import ATP-binding protein PstB from Rhodopseudomonas palustris (strain BisB18).